A 208-amino-acid chain; its full sequence is Thymidylate kinase (208 aa).

ATP is bound at residue 10 to 17 (GPEGSGKT).

This sequence belongs to the thymidylate kinase family.

The enzyme catalyses dTMP + ATP = dTDP + ADP. Functionally, phosphorylation of dTMP to form dTDP in both de novo and salvage pathways of dTTP synthesis. The sequence is that of Thymidylate kinase from Bacillus anthracis.